The sequence spans 702 residues: Antigen peptide transporter 2 (702 aa).

Residues 1-6 are Lumenal-facing; the sequence is MALSYL. The helical transmembrane segment at 7–27 threads the bilayer; sequence RPWVSLLLADMALLGLLQGSL. Topologically, residues 28–56 are cytoplasmic; that stretch reads GNLLPQGLPGLWIEGTLRLGVLWGLLKVG. Residues 57–77 traverse the membrane as a helical segment; it reads ELLGLVGTLLPLLCLATPLFF. Residues 78–98 are Lumenal-facing; it reads SLRALVGGTASTSVVRVASAS. A helical transmembrane segment spans residues 99–119; the sequence is WGWLLAGYGAVALSWAVWAVL. Residues 120-147 lie on the Cytoplasmic side of the membrane; that stretch reads SPAGVQEKEPGQENRTLMKRLLKLSRPD. The helical transmembrane segment at 148–168 threads the bilayer; it reads LPFLIAAFFFLVVAVWGETLI. The region spanning 151 to 434 is the ABC transmembrane type-1 domain; sequence LIAAFFFLVV…LVYMYGDMLS (284 aa). Over 169–186 the chain is Lumenal; the sequence is PRYSGRVIDILGGDFDPD. Residues 187 to 207 form a helical membrane-spanning segment; the sequence is AFASAIFFMCLFSVGSSFSAG. Residues 208 to 265 are Cytoplasmic-facing; the sequence is CRGGSFLFTMSRINLRIREQLFSSLLRQDLGFFQETKTGELNSRLSSDTSLMSRWLPF. A helical transmembrane segment spans residues 266 to 286; that stretch reads NANILLRSLVKVVGLYFFMLQ. Topologically, residues 287-292 are lumenal; sequence VSPRLT. Residues 293-313 form a helical membrane-spanning segment; the sequence is FLSLLDLPLTIAAEKVYNPRH. A part of the peptide-binding site region spans residues 300–388; the sequence is PLTIAAEKVY…RRVMALGMQV (89 aa). At 314–373 the chain is on the cytoplasmic side; sequence QAVLKEIQDAVAKAGQVVREAVGGLQTVRSFGAEEQEVSHYKEALERCRQLWWRRDLEKD. A helical transmembrane segment spans residues 374 to 394; sequence VYLVIRRVMALGMQVLILNCG. At 395–407 the chain is on the lumenal side; sequence VQQILAGEVTRGG. A helical transmembrane segment spans residues 408–428; sequence LLSFLLYQEEVGQYVRNLVYM. The part of the peptide-binding site stretch occupies residues 413–432; the sequence is LYQEEVGQYVRNLVYMYGDM. Residues 429 to 702 are Cytoplasmic-facing; the sequence is YGDMLSNVGA…AHLVQQRLEA (274 aa). The 235-residue stretch at 467–701 folds into the ABC transporter domain; that stretch reads VEFQDVSFSY…YAHLVQQRLE (235 aa). Residue 502-509 participates in ATP binding; that stretch reads GPNGSGKS.

The protein belongs to the ABC transporter superfamily. ABCB family. MHC peptide exporter (TC 3.A.1.209) subfamily. Heterodimer of TAP1 and TAP2 (TAP1-TAP2). A component of the peptide loading complex (PLC), interacts via TAPBP with MHCI heterodimer; this interaction mediates peptide-MHCI assembly. Mg(2+) serves as cofactor.

It is found in the endoplasmic reticulum membrane. It catalyses the reaction a peptide antigen(in) + ATP + H2O = a peptide antigen(out) + ADP + phosphate + H(+). Its function is as follows. ABC transporter associated with antigen processing. In complex with TAP1 mediates unidirectional translocation of peptide antigens from cytosol to endoplasmic reticulum (ER) for loading onto MHC class I (MHCI) molecules. Uses the chemical energy of ATP to export peptides against the concentration gradient. During the transport cycle alternates between 'inward-facing' state with peptide binding site facing the cytosol to 'outward-facing' state with peptide binding site facing the ER lumen. Peptide antigen binding to ATP-loaded TAP1-TAP2 induces a switch to hydrolysis-competent 'outward-facing' conformation ready for peptide loading onto nascent MHCI molecules. Subsequently ATP hydrolysis resets the transporter to the 'inward facing' state for a new cycle. As a component of the peptide loading complex (PLC), acts as a molecular scaffold essential for peptide-MHCI assembly and antigen presentation. The polypeptide is Antigen peptide transporter 2 (Tap2) (Mus musculus (Mouse)).